The primary structure comprises 101 residues: Putative septation protein SpoVG (101 aa).

The protein belongs to the SpoVG family.

Could be involved in septation. The sequence is that of Putative septation protein SpoVG from Anaeromyxobacter dehalogenans (strain 2CP-C).